The following is a 1089-amino-acid chain: Electroneutral sodium bicarbonate exchanger 1 (1089 aa).

The Extracellular portion of the chain corresponds to 1 to 476 (MPAGSNEPDG…DYRDALSLQC (476 aa)). The segment at 55 to 90 (LGRQSHRHHRTHGQKHRRRGGRGKGASQGEEGLEAL) is disordered. Residues 58–76 (QSHRHHRTHGQKHRRRGGR) are compositionally biased toward basic residues. A helical membrane pass occupies residues 477-497 (LASFLFLYCACMSPVITFGGL). Over 498-505 (LGEATEGR) the chain is Cytoplasmic. Residues 506-526 (ISAIESLFGASMTGIAYSLFA) form a helical membrane-spanning segment. Over 527 to 563 (GQPLTILGSTGPVLVFEKILFKFCKDYALSYLSLRAL) the chain is Extracellular. Residues 564–584 (IGLWTAFLCIVLVATDASSLV) form a helical membrane-spanning segment. Over 585–593 (CYITRFTEE) the chain is Cytoplasmic. The helical transmembrane segment at 594 to 614 (AFASLICIIFIYEAIEKLIHL) threads the bilayer. Over 615-685 (AETYPIHMHS…EFMGSACGHH (71 aa)) the chain is Extracellular. Cystine bridges form between Cys634–Cys682 and Cys636–Cys670. Asn644 carries N-linked (GlcNAc) asparagine glycosylation. The helical transmembrane segment at 686 to 706 (GPYTPDVLFWSCILFFATFIV) threads the bilayer. Over 707 to 729 (SSTLKTFKTSRYFPTRVRSMVSD) the chain is Cytoplasmic. A helical transmembrane segment spans residues 730 to 750 (FAVFLTIFTMVVLDFLIGVPS). Residues 751 to 776 (PKLQVPNVFKPTRDDRGWFINPIGPN) are Extracellular-facing. Residues 777–797 (PWWTVIAAIIPALLCTILIFM) traverse the membrane as a helical segment. Residues 798 to 822 (DQQITAVIINRKEHKLKKGCGYHLD) are Cytoplasmic-facing. Residues 823-843 (LLMVAVMLGVCSIMGLPWFVA) traverse the membrane as a helical segment. Residues 844 to 879 (ATVLSITHVNSLKLESECSAPGEQPKFLGIREQRVT) lie on the Extracellular side of the membrane. The helical transmembrane segment at 880–900 (GLMIFVLMGCSVFMTAVLKFI) threads the bilayer. Residues 901-902 (PM) are Cytoplasmic-facing. A helical transmembrane segment spans residues 903–923 (PVLYGVFLYMGVSSLQGIQFF). At 924 to 960 (DRLKLFGMPAKHQPDFIYLRHVPLRKVHLFTLVQLTC) the chain is on the extracellular side. The helical transmembrane segment at 961–981 (LVLLWVIKASPAAIVFPMMVL) threads the bilayer. Over 982-1089 (ALVFVRKVMD…GNTKEKSPFN (108 aa)) the chain is Cytoplasmic.

This sequence belongs to the anion exchanger (TC 2.A.31) family. As to quaternary structure, homodimer. Expressed in the hippocampal neurons (at protein level). Highly expressed in brain with lower levels in lung, kidney and heart. In the kidney, there is high expression in the inner medulla, localized to the inner medullary collecting duct. In the brain, there seems to be three transcripts each having a different expression pattern. The smaller 3kb transcript has highest expression levels in the thalamus and the largest 9.5kb transcript has highest levels in the substantia nigra. The middle transcript of 4.4kb, which is also the main transcript in kidney, is highly expressed in thalamus. Hence, the highest levels are observed in the thalamus, amygdala and caudate nucleus and very low expression was seen in the corpus callosum.

The protein resides in the cell membrane. It is found in the apical cell membrane. It localises to the basolateral cell membrane. The protein localises to the cytoplasmic vesicle. Its subcellular location is the secretory vesicle. The protein resides in the synaptic vesicle membrane. The enzyme catalyses 2 hydrogencarbonate(out) + chloride(in) + Na(+)(out) = 2 hydrogencarbonate(in) + chloride(out) + Na(+)(in). In terms of biological role, mediates electroneutral sodium- and carbonate-dependent chloride-HCO3(-) exchange with a Na(+):HCO3(-) stoichiometry of 2:1. Plays a major role in pH regulation in neurons. Mediates sodium reabsorption in the renal cortical collecting ducts. The chain is Electroneutral sodium bicarbonate exchanger 1 from Mus musculus (Mouse).